Reading from the N-terminus, the 151-residue chain is Probable ubiquitin-conjugating enzyme E2 W-B (151 aa).

Residues 3-151 (SMQKRLQKEL…TKWWYHDDTC (149 aa)) form the UBC core domain. C91 functions as the Glycyl thioester intermediate in the catalytic mechanism.

The protein belongs to the ubiquitin-conjugating enzyme family.

Its subcellular location is the nucleus. The enzyme catalyses S-ubiquitinyl-[E1 ubiquitin-activating enzyme]-L-cysteine + [E2 ubiquitin-conjugating enzyme]-L-cysteine = [E1 ubiquitin-activating enzyme]-L-cysteine + S-ubiquitinyl-[E2 ubiquitin-conjugating enzyme]-L-cysteine.. It carries out the reaction S-ubiquitinyl-[E1 ubiquitin-activating enzyme]-L-cysteine + [acceptor protein]-N-terminal-amino acid = [E1 ubiquitin-activating enzyme]-L-cysteine + N-terminal-ubiquitinyl-[acceptor protein].. It participates in protein modification; protein ubiquitination. Its function is as follows. Accepts ubiquitin from the E1 complex and catalyzes its covalent attachment to other proteins. Catalyzes monoubiquitination. Involved in degradation of misfolded chaperone substrate and DNA repair. This is Probable ubiquitin-conjugating enzyme E2 W-B (ube2wb) from Danio rerio (Zebrafish).